We begin with the raw amino-acid sequence, 346 residues long: Methionine import ATP-binding protein MetN 1 (346 aa).

One can recognise an ABC transporter domain in the interval 2 to 241; the sequence is IELKNVSKVF…PQHVTTKKFV (240 aa). Residue 38-45 coordinates ATP; the sequence is GYSGAGKS.

The protein belongs to the ABC transporter superfamily. Methionine importer (TC 3.A.1.24) family. In terms of assembly, the complex is composed of two ATP-binding proteins (MetN), two transmembrane proteins (MetI) and a solute-binding protein (MetQ).

The protein resides in the cell membrane. It carries out the reaction L-methionine(out) + ATP + H2O = L-methionine(in) + ADP + phosphate + H(+). It catalyses the reaction D-methionine(out) + ATP + H2O = D-methionine(in) + ADP + phosphate + H(+). Part of the ABC transporter complex MetNIQ involved in methionine import. Responsible for energy coupling to the transport system. This chain is Methionine import ATP-binding protein MetN 1, found in Bacillus cereus (strain ATCC 10987 / NRS 248).